A 240-amino-acid chain; its full sequence is Sugar fermentation stimulation protein homolog (240 aa).

This sequence belongs to the SfsA family.

In Pasteurella multocida (strain Pm70), this protein is Sugar fermentation stimulation protein homolog.